The primary structure comprises 38 residues: Large ribosomal subunit protein bL36 (38 aa).

It belongs to the bacterial ribosomal protein bL36 family.

In Pseudomonas entomophila (strain L48), this protein is Large ribosomal subunit protein bL36.